The following is a 321-amino-acid chain: Peptide transport system permease protein SapB (321 aa).

Topologically, residues 1 to 8 are cytoplasmic; that stretch reads MIIFTLRR. A helical transmembrane segment spans residues 9–29; that stretch reads LLLLLVTLFFLTFIGFSLSYF. The Periplasmic segment spans residues 30-80; that stretch reads TPHAPLQGASLWNAWVFWFNGLLHWDFGVSSINGQLISEQLKEVFPATMEL. An ABC transmembrane type-1 domain is found at 74–302; sequence FPATMELCIL…SLVIVVNVIS (229 aa). Residues 81–101 form a helical membrane-spanning segment; that stretch reads CILAFGFALMVGIPVGMLAGV. The Cytoplasmic portion of the chain corresponds to 102–113; the sequence is TRSKWPDRFISA. A helical transmembrane segment spans residues 114-134; the sequence is LALLGFSIPVFWLALLLTLFF. At 135–174 the chain is on the periplasmic side; it reads SLTLGWLPVSGRFDLLYEVKPVTGFAIIDAWISDSPWRDE. A helical membrane pass occupies residues 175 to 195; that stretch reads MVMSAIRHMVLPVLTLSVAPT. Residues 196–248 are Cytoplasmic-facing; the sequence is TEVIRLMRISTIEVYDQNYVKAAATRGLSRFTILRRHVLHNALPPVIPRLGLQ. The chain crosses the membrane as a helical span at residues 249 to 269; it reads FSTMLTLAMITEMVFSWPGLG. At 270–280 the chain is on the periplasmic side; sequence RWLIHAIRQQD. A helical membrane pass occupies residues 281–301; that stretch reads YAAISAGVMVIGSLVIVVNVI. At 302 to 321 the chain is on the cytoplasmic side; the sequence is SDILGAMANPLKHKEWYALR.

The protein belongs to the binding-protein-dependent transport system permease family. OppBC subfamily.

It localises to the cell inner membrane. In terms of biological role, involved in a peptide intake transport system that plays a role in the resistance to antimicrobial peptides. This Salmonella typhimurium (strain LT2 / SGSC1412 / ATCC 700720) protein is Peptide transport system permease protein SapB.